Here is a 68-residue protein sequence, read N- to C-terminus: Conotoxin ArMMSK-01 (68 aa).

Residues 1–20 (MMSKLGVLLTICMLLFPLTA) form the signal peptide. The propeptide occupies 21–51 (LPLDGDQPADRPAERMQDDFISEQHPLFNPI). Intrachain disulfides connect C54-C67, C55-C63, and C59-C66. A 4-hydroxyproline modification is found at P65.

The protein belongs to the conotoxin M superfamily. As to expression, expressed by the venom duct.

The protein resides in the secreted. This chain is Conotoxin ArMMSK-01, found in Conus arenatus (Sand-dusted cone).